Reading from the N-terminus, the 166-residue chain is Antibacterial peptide PMAP-36 (166 aa).

The first 29 residues, 1 to 29 (METQRASLCLGRWSLWLLLLGLVVPSASA), serve as a signal peptide directing secretion. Positions 30–129 (QALSYREAVL…LDINCDEIQS (100 aa)) are excised as a propeptide. 2 cysteine pairs are disulfide-bonded: Cys85/Cys96 and Cys107/Cys124.

It belongs to the cathelicidin family.

It localises to the secreted. Functionally, exerts antimicrobial activity against both Gram-positive and negative bacteria. Its activity appears to be mediated by its ability to damage bacterial membranes. The polypeptide is Antibacterial peptide PMAP-36 (PMAP36) (Sus scrofa (Pig)).